A 471-amino-acid polypeptide reads, in one-letter code: NADH-quinone oxidoreductase subunit N 1 (471 aa).

Helical transmembrane passes span 11–31, 39–59, 81–101, 105–125, 127–147, 162–182, 200–220, 234–254, 270–290, 296–316, 324–344, 365–385, 398–418, and 444–464; these read ALVPEITLLVSAVTGLLAGAW, TIHVLAALATVVGLVATALAA, AIVLVAVLALIALSRDTVAGH, TEFVVLLQLGALGSIALAGAG, LIMLFAAFLLASVPFYALAGW, LAGALAGVTTAAGVTILFGVA, AAAAVGLIAVLAGLAFKAGAV, PPPVAAALTTVPKIGALVAFY, LITAVLATAGMTLGNLAAFAQ, MLGYSTVSQVGYLLMAVAVAG, ALLLYLAAYALTNIAGFAVVA, ALALTVALLGLVGTPPTAVFV, GLAWLVVIAALNTLASLFYYL, and AVALTTAALTLLLGIGSGIVL.

This sequence belongs to the complex I subunit 2 family. In terms of assembly, NDH-1 is composed of 14 different subunits. Subunits NuoA, H, J, K, L, M, N constitute the membrane sector of the complex.

Its subcellular location is the cell membrane. The enzyme catalyses a quinone + NADH + 5 H(+)(in) = a quinol + NAD(+) + 4 H(+)(out). In terms of biological role, NDH-1 shuttles electrons from NADH, via FMN and iron-sulfur (Fe-S) centers, to quinones in the respiratory chain. The immediate electron acceptor for the enzyme in this species is believed to be a menaquinone. Couples the redox reaction to proton translocation (for every two electrons transferred, four hydrogen ions are translocated across the cytoplasmic membrane), and thus conserves the redox energy in a proton gradient. This is NADH-quinone oxidoreductase subunit N 1 from Streptomyces griseus subsp. griseus (strain JCM 4626 / CBS 651.72 / NBRC 13350 / KCC S-0626 / ISP 5235).